The sequence spans 366 residues: Transaldolase (366 aa).

The Schiff-base intermediate with substrate role is filled by lysine 140.

The protein belongs to the transaldolase family. Type 2 subfamily.

The protein localises to the cytoplasm. It carries out the reaction D-sedoheptulose 7-phosphate + D-glyceraldehyde 3-phosphate = D-erythrose 4-phosphate + beta-D-fructose 6-phosphate. The protein operates within carbohydrate degradation; pentose phosphate pathway; D-glyceraldehyde 3-phosphate and beta-D-fructose 6-phosphate from D-ribose 5-phosphate and D-xylulose 5-phosphate (non-oxidative stage): step 2/3. Transaldolase is important for the balance of metabolites in the pentose-phosphate pathway. The protein is Transaldolase of Saccharopolyspora erythraea (strain ATCC 11635 / DSM 40517 / JCM 4748 / NBRC 13426 / NCIMB 8594 / NRRL 2338).